Here is a 971-residue protein sequence, read N- to C-terminus: Exportin-2 (971 aa).

Residue M1 is modified to N-acetylmethionine. The 74-residue stretch at 29–102 folds into the Importin N-terminal domain; the sequence is AEKFLESVEG…KANIVHLMLS (74 aa). At S112 the chain carries Phosphoserine. 2 positions are modified to N6-acetyllysine: K574 and K824. S931 bears the Phosphoserine mark.

The protein belongs to the XPO2/CSE1 family. As to quaternary structure, found in a complex with CSE1L/XPO2, Ran and KPNA2. Binds with high affinity to importin-alpha only in the presence of RanGTP. The complex is dissociated by the combined action of RanBP1 and RanGAP1. Interacts with CFTR.

It is found in the cytoplasm. It localises to the nucleus. Export receptor for importin-alpha. Mediates importin-alpha re-export from the nucleus to the cytoplasm after import substrates (cargos) have been released into the nucleoplasm. In the nucleus binds cooperatively to importin-alpha and to the GTPase Ran in its active GTP-bound form. Docking of this trimeric complex to the nuclear pore complex (NPC) is mediated through binding to nucleoporins. Upon transit of a nuclear export complex into the cytoplasm, disassembling of the complex and hydrolysis of Ran-GTP to Ran-GDP (induced by RANBP1 and RANGAP1, respectively) cause release of the importin-alpha from the export receptor. CSE1L/XPO2 then return to the nuclear compartment and mediate another round of transport. The directionality of nuclear export is thought to be conferred by an asymmetric distribution of the GTP- and GDP-bound forms of Ran between the cytoplasm and nucleus. The chain is Exportin-2 (CSE1L) from Bos taurus (Bovine).